The chain runs to 208 residues: LexA repressor (208 aa).

Positions 28–48 (RAEIARELGFRSANAAEEHLK) form a DNA-binding region, H-T-H motif. Active-site for autocatalytic cleavage activity residues include S125 and K162.

Belongs to the peptidase S24 family. In terms of assembly, homodimer.

It carries out the reaction Hydrolysis of Ala-|-Gly bond in repressor LexA.. Functionally, represses a number of genes involved in the response to DNA damage (SOS response), including recA and lexA. In the presence of single-stranded DNA, RecA interacts with LexA causing an autocatalytic cleavage which disrupts the DNA-binding part of LexA, leading to derepression of the SOS regulon and eventually DNA repair. The polypeptide is LexA repressor (Aliivibrio fischeri (strain ATCC 700601 / ES114) (Vibrio fischeri)).